The following is a 69-amino-acid chain: Putative membrane protein insertion efficiency factor (69 aa).

It belongs to the UPF0161 family.

It localises to the cell inner membrane. Functionally, could be involved in insertion of integral membrane proteins into the membrane. In Dechloromonas aromatica (strain RCB), this protein is Putative membrane protein insertion efficiency factor.